Consider the following 807-residue polypeptide: MSKQDSLWFKSLRWLQKKLVHTIVVPQEPFKDLNLDPEKPLVYVMKTESLSDIAALSEITGELGLPSPYEPLEVEGRSTPRVVCLEGAKPLMGKRESNEFFLSSFMDLLKAHKESPDLDIQLVPVSLYWGRTPGKEDDTMKAAVLERENPTWLRKCLMILFLGRHNFVQFSNSVSIRYMADEHGTDKRIAHKLARVARVHFSRQRKVMTGPVLPKRQALFHALINSESLKRAIQEEATSKKISEVEARAKAMEYLDEIAADYSDSLVRIAERFLTWLWNKLYKGINIKGAEQIRQLHHDGHEIIYVPCHRSHMDYLLLSYILYYQGMVPPHIAAGINLNFWPAGPMFRRGGAFFIRRSFRGNKLYTAVFREYLDQLFTKGYSVEYFTEGGRSRTGRLLAPKTGMIAMTLNSVLRGMERPVTLVPVYLGYDHVMEVATYHKELSGKKKKKESVWQVFGALRKLGNFGQGYVNFGKPITLHSFLNEQVPDWREEIASDPEQKPTWLTPVVNTLANQVMTNINDAAAVSSVTLTSLVLLASEQNALERTQLEKQLDLYLKLLKDLPYTSYTSVVEGDGKQLVTQGLELKKLQLDSDPLGDIVSIDESISIAMTYYRNNIIHLMIIPSLVASCLTQHERITRDEIKAIIADFYPLLEAELFMGVEDTDKLVEQILDLFIEQQLIREDTGFSVVETSINQLLLLAGTVSETLQRYAIIFNLLADFPEMERSDLEAESHKLAKRLGALHGITAPEFYDKNLYRTLSVKLKDLGYLKDNGNKADVERVRASANGLLRSSVRQTIVDSVAAERSA.

Residues 308-313 (CHRSHM) carry the HXXXXD motif motif.

It belongs to the GPAT/DAPAT family.

It localises to the cell inner membrane. It carries out the reaction sn-glycerol 3-phosphate + an acyl-CoA = a 1-acyl-sn-glycero-3-phosphate + CoA. It functions in the pathway phospholipid metabolism; CDP-diacylglycerol biosynthesis; CDP-diacylglycerol from sn-glycerol 3-phosphate: step 1/3. In Shewanella woodyi (strain ATCC 51908 / MS32), this protein is Glycerol-3-phosphate acyltransferase.